Here is a 242-residue protein sequence, read N- to C-terminus: Terpene cyclase dpchB (242 aa).

Transmembrane regions (helical) follow at residues 16-36, 51-71, 78-95, 114-134, 141-161, 169-189, and 207-227; these read VVWIADTCKLIMGIGWTANYV, ALLPLCCNFAWELTYAIMYAF, YVHFSGLLLNCGVMYTAV, LIFVLAVAGFASAHVVLAKQV, AWSAYACQLLLSVGGLCQLLC, SYFLWFSRFFGSLVLVPQDII, and IWFVTIFLILDGSYGLCLWYV.

This sequence belongs to the paxB family.

The protein resides in the membrane. The protein operates within secondary metabolite biosynthesis; terpenoid biosynthesis. Functionally, terpene cyclase; part of the gene cluster that mediates the biosynthesis of the diterpenoid pyrones higginsianins A and B. The first step of the pathway is the synthesis of the alpha-pyrone moiety by the polyketide synthase dpchA via condensation of one acetyl-CoA starter unit with 3 malonyl-CoA units and 2 methylations. The alpha-pyrone is then combined with geranylgeranyl pyrophosphate (GGPP) formed by the GGPP synthase dpchD through the action of the prenyltransferase dpchC to yield a linear alpha-pyrone diterpenoid. Subsequent steps in the diterpenoid pyrone biosynthetic pathway involve the decalin core formation, which is initiated by the epoxidation of the C10-C11 olefin by the FAD-dependent oxidoreductase dpchE, and is followed by a cyclization cascade catalyzed by the terpene cyclase dpchB. The short chain dehydrogenase/reductase dpchG then oxidizes the 8S hydroxy group to a ketone and the short chain dehydrogenase/reductase dpchH reduces the ketone to the 8R hydroxy group to yield higginsianin B. Finally, the FAD-dependent oxidoreductase dpchF converts higginsianin B into higginsianin A. In Colletotrichum higginsianum (strain IMI 349063) (Crucifer anthracnose fungus), this protein is Terpene cyclase dpchB.